Here is a 210-residue protein sequence, read N- to C-terminus: Uracil phosphoribosyltransferase (210 aa).

Residues arginine 80, arginine 105, and 132 to 140 (DPMLATGGS) each bind 5-phospho-alpha-D-ribose 1-diphosphate. Residues isoleucine 195 and 200 to 202 (GDA) each bind uracil. Residue aspartate 201 participates in 5-phospho-alpha-D-ribose 1-diphosphate binding.

This sequence belongs to the UPRTase family. The cofactor is Mg(2+).

The catalysed reaction is UMP + diphosphate = 5-phospho-alpha-D-ribose 1-diphosphate + uracil. It functions in the pathway pyrimidine metabolism; UMP biosynthesis via salvage pathway; UMP from uracil: step 1/1. Allosterically activated by GTP. In terms of biological role, catalyzes the conversion of uracil and 5-phospho-alpha-D-ribose 1-diphosphate (PRPP) to UMP and diphosphate. This Deinococcus radiodurans (strain ATCC 13939 / DSM 20539 / JCM 16871 / CCUG 27074 / LMG 4051 / NBRC 15346 / NCIMB 9279 / VKM B-1422 / R1) protein is Uracil phosphoribosyltransferase.